A 264-amino-acid chain; its full sequence is uncharacterized protein (264 aa).

A run of 4 helical transmembrane segments spans residues 43-63 (VVAA…LYLI), 68-88 (FLPS…LLGI), 96-116 (ILPA…LGCI), and 150-170 (LAAK…VLAV). Residues 216-247 (SYEDALKNSSQQPSTSSSSSSPPSRPPHSVYT) form a disordered region. The span at 224–237 (SSQQPSTSSSSSSP) shows a compositional bias: low complexity.

It localises to the membrane. This is an uncharacterized protein from Caenorhabditis elegans.